We begin with the raw amino-acid sequence, 89 residues long: Small ribosomal subunit protein uS15 (89 aa).

This sequence belongs to the universal ribosomal protein uS15 family. In terms of assembly, part of the 30S ribosomal subunit. Forms a bridge to the 50S subunit in the 70S ribosome, contacting the 23S rRNA.

One of the primary rRNA binding proteins, it binds directly to 16S rRNA where it helps nucleate assembly of the platform of the 30S subunit by binding and bridging several RNA helices of the 16S rRNA. Its function is as follows. Forms an intersubunit bridge (bridge B4) with the 23S rRNA of the 50S subunit in the ribosome. The protein is Small ribosomal subunit protein uS15 of Phocaeicola vulgatus (strain ATCC 8482 / DSM 1447 / JCM 5826 / CCUG 4940 / NBRC 14291 / NCTC 11154) (Bacteroides vulgatus).